Consider the following 203-residue polypeptide: Eukaryotic translation initiation factor isoform 4E (203 aa).

Over residues 1–25 (MATETAGAVVESSSAATVPSPAPEA) the composition is skewed to low complexity. The tract at residues 1–27 (MATETAGAVVESSSAATVPSPAPEAGS) is disordered. MRNA contacts are provided by residues 47 to 52 (QGAAWG), lysine 79, and 97 to 98 (WE). Cysteines 102 and 141 form a disulfide. 148–153 (RQRQDK) serves as a coordination point for mRNA.

Belongs to the eukaryotic initiation factor 4E family. EIF4F is a multi-subunit complex, the composition of which varies with external and internal environmental conditions. It is composed of at least EIF4A, EIF4E and EIF4G. EIF4E is also known to interact with other partners. In higher plants two isoforms of EIF4F have been identified, named isoform EIF4F and isoform EIF(iso)4F. Isoform EIF4F has subunits p220 and p26, whereas isoform EIF(iso)4F has subunits p82 and p28. In terms of assembly, (Microbial infection) Interacts with the potyvirus peanut stripe virus (PStV) helper component proteinase (HC-Pro) in the cytoplasm and with PStV viral genome-linked protein (VPg) in the nucleus; these interactions are possible in susceptible hosts but impaired in resistant plants. According to the redox status, the Cys-102-Cys-141 disulfide bridge may have a role in regulating protein function by affecting its ability to bind capped mRNA. Expressed ubiquitously with highest levels in young leaves and roots, and lowest levels in flowers.

Its subcellular location is the cytoplasm. The protein localises to the nucleus. In terms of biological role, component of the protein complex eIF4F, which is involved in the recognition of the mRNA cap, ATP-dependent unwinding of 5'-terminal secondary structure and recruitment of mRNA to the ribosome. Recognizes and binds the 7-methylguanosine-containing mRNA cap during an early step in the initiation of protein synthesis and facilitates ribosome binding by inducing the unwinding of the mRNAs secondary structures. Key component of recessive resistance to potyviruses such as peanut stripe virus (PStV). Its function is as follows. (Microbial infection) Susceptibility host factor required for viral infection by recruiting viral RNAs to the host ribosomal complex via an interaction with viral genome-linked protein (VPg). The protein is Eukaryotic translation initiation factor isoform 4E of Arachis hypogaea (Peanut).